The sequence spans 50 residues: Putative protein HokF (50 aa).

Residues 5–25 (YALVAVIVLCLTVPGFTLLVG) form a helical membrane-spanning segment.

Belongs to the Hok/Gef family.

It localises to the cell inner membrane. Functionally, toxic component of a type I toxin-antitoxin (TA) system. When overexpressed kills cells within minutes; causes collapse of the transmembrane potential and arrest of respiration. Its toxic effect is probably neutralized by an antisense antitoxin Sok RNA. The protein is Putative protein HokF (hokF) of Escherichia coli O157:H7.